The chain runs to 459 residues: MEDIQKNHEAQRGLQNRHIQLIAIAGTIGTGLFLGAGKTIQMTGPSVIFAYILIGIAMFFFLRTIGEMLYNDPSQHSFLNFVTKYSGIRTGYFTQWSYWLVIVFVCISELTAIGTYIQFWLPHLPLWLIEIVMLALLFGLNTLNSRFFGETEFWFAMIKVAAILGMIVTAIILVASNFHYTTVLSGKTVNDTASLNNIFDGFQLFPHGAWNFVGALQMVMFAFTSMEFIGMTAAETVNPKKSLPKAINQIPVRILLFYVGALLAIMAIFNWHYIPADKSPFVIVFQLIGIKWAAALINFVVLTSAASALNSSLFSATRNMYSLAKQHDKGRLTAFTKLSKAGIPINALYMATALSLLAPVLTLIPQIKNAFNFAASCTTNLFLVVYFITLYTYWQYRKSDDYNPNGFLTPKPTIAVPFIAIIFAIVFASLFFNADTFYPALGAIVWTLIFGLYSHFKKI.

12 helical membrane passes run 19 to 39, 42 to 62, 97 to 117, 119 to 139, 153 to 173, 212 to 232, 254 to 274, 281 to 301, 341 to 361, 370 to 390, 412 to 432, and 436 to 456; these read IQLI…AGKT, MTGP…FFFL, SYWL…GTYI, FWLP…LLFG, FWFA…AIIL, FVGA…IGMT, ILLF…WHYI, FVIV…NFVV, AGIP…APVL, AFNF…FITL, PTIA…SLFF, and TFYP…YSHF.

This sequence belongs to the amino acid-polyamine-organocation (APC) superfamily. Amino acid transporter (AAT) (TC 2.A.3.1) family.

The protein resides in the cell membrane. In terms of biological role, transports L-serine, L-threonine and L-cysteine with high affinity. Stereoselective, with a strong preference for L-serine. Is the main L-serine transporter and is responsible for optimal growth in media containing free amino acids as the sole source of amino acids. Is also the main transporter for L-threonine. The sequence is that of Serine permease SerP1 from Lactococcus lactis subsp. cremoris (strain MG1363).